A 1031-amino-acid chain; its full sequence is Sister chromatid cohesion 1 protein 4 (1031 aa).

The tract at residues 461-481 (TPDKEDPGTCNDDAGNNNITG) is disordered. The Nuclear localization signal signature appears at 545 to 552 (TKRLRSAP). Disordered regions lie at residues 661–703 (VEEN…EELK), 742–772 (EKLD…ADPN), and 803–835 (ELPH…VGST). Basic and acidic residues-rich tracts occupy residues 742 to 762 (EKLD…HDGE) and 803 to 825 (ELPH…RDDQ).

It belongs to the rad21 family. As to quaternary structure, component of the cohesin complex. As to expression, expressed in tissues containing dividing cells such as seedlings, flower buds, flowers and inflorescence meristem tissue.

The protein resides in the nucleus. The protein localises to the chromosome. It localises to the centromere. Its function is as follows. Involved in sister chromatid and centromere cohesion during mitosis. This is Sister chromatid cohesion 1 protein 4 (SYN4) from Arabidopsis thaliana (Mouse-ear cress).